Consider the following 285-residue polypeptide: Eukaryotic translation initiation factor 3 subunit F-2 (285 aa).

The 135-residue stretch at Val-11 to Gly-145 folds into the MPN domain.

The protein belongs to the eIF-3 subunit F family. Component of the eukaryotic translation initiation factor 3 (eIF-3) complex. The eIF-3 complex interacts with pix.

The protein localises to the cytoplasm. Component of the eukaryotic translation initiation factor 3 (eIF-3) complex, which is involved in protein synthesis of a specialized repertoire of mRNAs and, together with other initiation factors, stimulates binding of mRNA and methionyl-tRNAi to the 40S ribosome. The eIF-3 complex specifically targets and initiates translation of a subset of mRNAs involved in cell proliferation. The protein is Eukaryotic translation initiation factor 3 subunit F-2 of Drosophila erecta (Fruit fly).